The primary structure comprises 332 residues: Malate dehydrogenase (332 aa).

NAD(+)-binding positions include 16 to 17, D43, and G90; that span reads QI. R99 provides a ligand contact to oxaloacetate. NAD(+)-binding residues include Q113 and N132. Positions 132, 163, 188, and 243 each coordinate oxaloacetate. Catalysis depends on H188, which acts as the Proton acceptor.

It belongs to the LDH/MDH superfamily. MDH type 2 family. Homodimer.

Its subcellular location is the cytoplasm. The enzyme catalyses (S)-malate + NAD(+) = oxaloacetate + NADH + H(+). Its function is as follows. Catalyzes the reduction of the carbonyl group of oxalacetic acid. No activity with pulegone. This Nicotiana tabacum (Common tobacco) protein is Malate dehydrogenase (MD1).